A 100-amino-acid chain; its full sequence is MGALRPWHIAVLVVVLILLFGAKRLPDAARSLGRSLRIIKAETKSLHDDDRDLAEKADAQAGYQPMPPQVQQGQHPQQSPYPAPPQQQPVVDPVQRTRDS.

A helical transmembrane segment spans residues 1-21 (MGALRPWHIAVLVVVLILLFG). The segment covering 46–58 (LHDDDRDLAEKAD) has biased composition (basic and acidic residues). A disordered region spans residues 46–100 (LHDDDRDLAEKADAQAGYQPMPPQVQQGQHPQQSPYPAPPQQQPVVDPVQRTRDS). Residues 69-78 (QVQQGQHPQQ) are compositionally biased toward low complexity.

Belongs to the TatA/E family. The Tat system comprises two distinct complexes: a TatABC complex, containing multiple copies of TatA, TatB and TatC subunits, and a separate TatA complex, containing only TatA subunits. Substrates initially bind to the TatABC complex, which probably triggers association of the separate TatA complex to form the active translocon.

It is found in the cell membrane. Part of the twin-arginine translocation (Tat) system that transports large folded proteins containing a characteristic twin-arginine motif in their signal peptide across membranes. TatA could form the protein-conducting channel of the Tat system. This is Sec-independent protein translocase protein TatA from Salinispora tropica (strain ATCC BAA-916 / DSM 44818 / JCM 13857 / NBRC 105044 / CNB-440).